We begin with the raw amino-acid sequence, 394 residues long: MAAYDWIESALATVHKANWYRSVKTMSSPGPTAVLNGQTVINFASNDYLGLAGDSRLAEAAIAAINTYGTGSTGSRLLSGHRMIHEQLERAIATWKQTETAIVYSSGYLANIGTITALVNKRDLILADAYNHASLKNGARLSGATIHEFGHANVTELQTLLETHRSHHRRCLLVTDSVFSMDGDLCPLPELIALAEQYDCMLLIDEAHGTGVLGKTGAGCVEHFGCRDAELIQMGTLSKALGSLGGYVAGSASLIDYLRNRSSSWIYTTGLSPADTAAALAAVEIIREGSELRSQLWQRVTQLKQALTTHLAPEDEHQTMQLLPSESPILCVQMPTPAAVLTASQQLLDQGIFAPAIRPPTVPTSRIRISIMATHQAVQIDQLIVALSEVAQGS.

Position 21 (Arg21) interacts with substrate. Residue 107-108 coordinates pyridoxal 5'-phosphate; that stretch reads GY. His132 is a substrate binding site. Pyridoxal 5'-phosphate contacts are provided by residues Ser180, 205 to 208, and 236 to 239; these read DEAH and TLSK. Lys239 bears the N6-(pyridoxal phosphate)lysine mark. Residue Thr361 participates in substrate binding.

The protein belongs to the class-II pyridoxal-phosphate-dependent aminotransferase family. BioF subfamily. Homodimer. It depends on pyridoxal 5'-phosphate as a cofactor.

The enzyme catalyses 6-carboxyhexanoyl-[ACP] + L-alanine + H(+) = (8S)-8-amino-7-oxononanoate + holo-[ACP] + CO2. It functions in the pathway cofactor biosynthesis; biotin biosynthesis. Its function is as follows. Catalyzes the decarboxylative condensation of pimeloyl-[acyl-carrier protein] and L-alanine to produce 8-amino-7-oxononanoate (AON), [acyl-carrier protein], and carbon dioxide. The sequence is that of Putative 8-amino-7-oxononanoate synthase (bioF) from Acaryochloris marina (strain MBIC 11017).